The following is a 411-amino-acid chain: LIM domain-binding protein 1 (411 aa).

Disordered stretches follow at residues 284-330 (PPAE…TFAL) and 367-411 (DAAN…QASQ). Residues 302–318 (SGGSTMSSGGGNTNNSN) show a composition bias toward low complexity. In terms of domain architecture, LIM interaction domain (LID) spans 336–375 (DVMVVGEPTLMGGEFGDEDERLITRLENTQFDAANGIDDE).

This sequence belongs to the LDB family. Forms homodimers and heterodimers. As to expression, first expressed at stages 15-16 in presumptive limb mesoderm. As limb outgrowth proceeds, expressed in the entire limb bud, concentrating in the distal mesoderm throughout limb development. Both hindlimbs and forelimbs exhibit similar expression patterns.

It localises to the nucleus. Functionally, binds to the LIM domain of a wide variety of LIM domain-containing transcription factors. In Gallus gallus (Chicken), this protein is LIM domain-binding protein 1.